The primary structure comprises 303 residues: MEPTTEIQATEDLTLSGDHAAASADSLVVDNANDNAGQEEGFEIVLKDDETAPKQDPAKNAEFARRRIERKRQRELEQQMEAVKRGELPESLRVNPDLPPQPDINAYLSEEGLAKYDYDNSRALAAFNAANTEWLMKAQDARSNAVAEQGRKTQEFTQQSAQYVEAARKHYDAAEKLNIPDYQEKEDAFMQLVPPAVGADIMRLFPEKSAALMYHLGANPEKARQLLAMDGQSALIELTRLSERLTLKPRGKQISSAPPADQPITGDVSAANKDAIRKQMDAAASKGDVETYRKLKAKLKGIR.

Residues 1–74 (MEPTTEIQAT…RRRIERKRQR (74 aa)) are post-transcriptional autoregulatory domain. An interaction with the capsid protein region spans residues 275–303 (AIRKQMDAAASKGDVETYRKLKAKLKGIR).

As to quaternary structure, homodimer. Homotetramer. Interacts with the portal protein; this interaction initiates procapsid assembly, thereby ensuring incorporation of only one portal ring per capsid. Interacts (via C-terminus) with the capsid protein; this interaction allow to form the procapsid, in which the scaffolding protein forms an internal shell in the icosahedrally arranged capsid protein subunits.

Its function is as follows. Required for procapsid assembly. The interior of the prohead is filled with the scaffolding protein. The scaffolding protein is lost from the structure during packaging. Scaffolding protein exit is followed by the expansion of the procapsid into a mature capsid. The protein is Scaffolding protein (8) of Salmonella typhimurium (Bacteriophage P22).